The primary structure comprises 247 residues: Isoprenyl transferase (247 aa).

D18 is a catalytic residue. D18 is a binding site for Mg(2+). Residues 19–22 (GNGR), W23, R31, H35, and 63–65 (SSE) each bind substrate. N66 serves as the catalytic Proton acceptor. Residues W67, R69, R186, and 192 to 194 (RLS) each bind substrate. E205 lines the Mg(2+) pocket.

It belongs to the UPP synthase family. As to quaternary structure, homodimer. Mg(2+) is required as a cofactor.

Functionally, catalyzes the condensation of isopentenyl diphosphate (IPP) with allylic pyrophosphates generating different type of terpenoids. The chain is Isoprenyl transferase from Rhizobium meliloti (strain 1021) (Ensifer meliloti).